The sequence spans 303 residues: Hydroxyethylthiazole kinase (303 aa).

A compositionally biased stretch (polar residues) spans 1–15; sequence MTTASTTPNSDTSNL. The interval 1–23 is disordered; the sequence is MTTASTTPNSDTSNLHEVAPDDP. Met-67 serves as a coordination point for substrate. Positions 142 and 206 each coordinate ATP. Gly-233 provides a ligand contact to substrate.

The protein belongs to the Thz kinase family. Mg(2+) is required as a cofactor.

The enzyme catalyses 5-(2-hydroxyethyl)-4-methylthiazole + ATP = 4-methyl-5-(2-phosphooxyethyl)-thiazole + ADP + H(+). It participates in cofactor biosynthesis; thiamine diphosphate biosynthesis; 4-methyl-5-(2-phosphoethyl)-thiazole from 5-(2-hydroxyethyl)-4-methylthiazole: step 1/1. Catalyzes the phosphorylation of the hydroxyl group of 4-methyl-5-beta-hydroxyethylthiazole (THZ). The chain is Hydroxyethylthiazole kinase from Bifidobacterium animalis subsp. lactis (strain AD011).